The sequence spans 133 residues: Arsenate reductase 1 (133 aa).

Active-site nucleophile residues include Cys10, Cys82, and Cys89. Intrachain disulfides connect Cys10-Cys82 and Cys82-Cys89.

It belongs to the low molecular weight phosphotyrosine protein phosphatase family. Thioredoxin-coupled ArsC subfamily.

It is found in the cytoplasm. The catalysed reaction is arsenate + [thioredoxin]-dithiol + H(+) = arsenite + [thioredoxin]-disulfide + H2O. Functionally, catalyzes the reduction of arsenate [As(V)] to arsenite [As(III)]. The protein is Arsenate reductase 1 of Staphylococcus haemolyticus (strain JCSC1435).